Reading from the N-terminus, the 241-residue chain is Leucyl/phenylalanyl-tRNA--protein transferase (241 aa).

Belongs to the L/F-transferase family.

It localises to the cytoplasm. It catalyses the reaction N-terminal L-lysyl-[protein] + L-leucyl-tRNA(Leu) = N-terminal L-leucyl-L-lysyl-[protein] + tRNA(Leu) + H(+). The enzyme catalyses N-terminal L-arginyl-[protein] + L-leucyl-tRNA(Leu) = N-terminal L-leucyl-L-arginyl-[protein] + tRNA(Leu) + H(+). It carries out the reaction L-phenylalanyl-tRNA(Phe) + an N-terminal L-alpha-aminoacyl-[protein] = an N-terminal L-phenylalanyl-L-alpha-aminoacyl-[protein] + tRNA(Phe). Functions in the N-end rule pathway of protein degradation where it conjugates Leu, Phe and, less efficiently, Met from aminoacyl-tRNAs to the N-termini of proteins containing an N-terminal arginine or lysine. The polypeptide is Leucyl/phenylalanyl-tRNA--protein transferase (Neisseria meningitidis serogroup C / serotype 2a (strain ATCC 700532 / DSM 15464 / FAM18)).